The chain runs to 121 residues: LOB domain-containing protein 23 (121 aa).

Residues 4 to 105 form the LOB domain; it reads KRCAACKYLR…NELAKTQAEI (102 aa).

It belongs to the LOB domain-containing protein family.

In Arabidopsis thaliana (Mouse-ear cress), this protein is LOB domain-containing protein 23 (LBD23).